A 548-amino-acid chain; its full sequence is Chaperonin GroEL (548 aa).

Residues T30–P33, K51, D87–T91, G415, N479–A481, and D495 contribute to the ATP site.

This sequence belongs to the chaperonin (HSP60) family. As to quaternary structure, forms a cylinder of 14 subunits composed of two heptameric rings stacked back-to-back. Interacts with the co-chaperonin GroES.

The protein localises to the cytoplasm. The enzyme catalyses ATP + H2O + a folded polypeptide = ADP + phosphate + an unfolded polypeptide.. Its function is as follows. Together with its co-chaperonin GroES, plays an essential role in assisting protein folding. The GroEL-GroES system forms a nano-cage that allows encapsulation of the non-native substrate proteins and provides a physical environment optimized to promote and accelerate protein folding. In Klebsiella pneumoniae (strain 342), this protein is Chaperonin GroEL.